We begin with the raw amino-acid sequence, 216 residues long: Maleylacetoacetate isomerase (216 aa).

Residue Met1 is modified to N-acetylmethionine. The 84-residue stretch at 4–87 folds into the GST N-terminal domain; that stretch reads GKPILYSYFR…YLEETRPIPR (84 aa). Residues 14–19 and Gln45 contribute to the glutathione site; that span reads SSCSWR. At Lys57 the chain carries N6-succinyllysine. Glutathione contacts are provided by residues Val59, 71–72, Gln111, and 115–117; these read QS and NLS. The region spanning 92–212 is the GST C-terminal domain; the sequence is DPQKRAIVRM…HPRRQPDTPA (121 aa). The residue at position 136 (Thr136) is a Phosphothreonine. Ser137 carries the post-translational modification Phosphoserine. An N6-succinyllysine modification is found at Lys177. Position 181 is a phosphoserine (Ser181).

It belongs to the GST superfamily. Zeta family. In terms of assembly, homodimer. Glutathione is required as a cofactor. Expressed in liver, kidney, seminal glands and breast.

The protein resides in the cytoplasm. It carries out the reaction 4-maleylacetoacetate = 4-fumarylacetoacetate. The enzyme catalyses RX + glutathione = an S-substituted glutathione + a halide anion + H(+). It participates in amino-acid degradation; L-phenylalanine degradation; acetoacetate and fumarate from L-phenylalanine: step 5/6. Functionally, probable bifunctional enzyme showing minimal glutathione-conjugating activity with ethacrynic acid and 7-chloro-4-nitrobenz-2-oxa-1, 3-diazole and maleylacetoacetate isomerase activity. Also has low glutathione peroxidase activity with t-butyl and cumene hydroperoxides. Is able to catalyze the glutathione dependent oxygenation of dichloroacetic acid to glyoxylic acid. The polypeptide is Maleylacetoacetate isomerase (Gstz1) (Mus musculus (Mouse)).